The following is a 1273-amino-acid chain: Kinesin-like protein KIN-7O (1273 aa).

Residues 3–327 (RIHVSVRARP…LQFASRALRV (325 aa)) enclose the Kinesin motor domain. 79–86 (GQTNSGKT) is a binding site for ATP. Residues 333-408 (VNEILTDAAL…QRERVLQEQA (76 aa)) are a coiled coil. Positions 452 to 474 (SEDQSNVLSRGSSLESARSERET) are disordered. Over residues 453 to 467 (EDQSNVLSRGSSLES) the composition is skewed to polar residues. 2 coiled-coil regions span residues 602–674 (EAIL…ESEV) and 751–1023 (VQSS…MEEE).

Belongs to the TRAFAC class myosin-kinesin ATPase superfamily. Kinesin family. KIN-7 subfamily.

This is Kinesin-like protein KIN-7O from Arabidopsis thaliana (Mouse-ear cress).